Consider the following 551-residue polypeptide: Cytochrome bc1 complex cytochrome b subunit (551 aa).

Residues 44 to 64 form a helical membrane-spanning segment; it reads FLLGEIALYSFIVLLLTGVYL. 2 residues coordinate heme: histidine 113 and histidine 127. 3 helical membrane-spanning segments follow: residues 117 to 137, 145 to 165, and 188 to 208; these read ALMFTAAIMVHLARIFFTGAF, WVIGSLLLILAMFEGYFGYSM, and VIGTWLHWALFGGDFPGTILI. Positions 215 and 230 each coordinate heme. Helical transmembrane passes span 216-236, 265-285, 334-354, 380-400, and 417-437; these read ILLIPGVILALIGLHLALVWF, SGAFFAAIVGVLGLMGGFLQI, PVWVAVIMALVFVLLITYPFL, IGAMAITFYMVLTLAAMNDII, and IGMVILPLLVYFITYRWCIGL. A disordered region spans residues 532 to 551; the sequence is ALREHQDSIASSPNGERGKH.

Belongs to the cytochrome b family. As to quaternary structure, the cytochrome bc1 complex is composed of a cytochrome b (QcrB), the Rieske iron-sulfur protein (QcrA) and a diheme cytochrome c (QcrC) subunit. Heme serves as cofactor.

The protein localises to the cell membrane. The enzyme catalyses a quinol + 2 Fe(III)-[cytochrome c](out) = a quinone + 2 Fe(II)-[cytochrome c](out) + 2 H(+)(out). In terms of biological role, cytochrome b subunit of the cytochrome bc1 complex, an essential component of the respiratory electron transport chain required for ATP synthesis. The bc1 complex catalyzes the oxidation of ubiquinol and the reduction of cytochrome c in the respiratory chain. The bc1 complex operates through a Q-cycle mechanism that couples electron transfer to generation of the proton gradient that drives ATP synthesis. The cytochrome b subunit contains two ubiquinol reactive sites: the oxidation (QP) site and the reduction (QN) site. This chain is Cytochrome bc1 complex cytochrome b subunit (qcrB), found in Mycobacterium leprae (strain TN).